Reading from the N-terminus, the 363-residue chain is Adenosine deaminase (363 aa).

2 residues coordinate Zn(2+): His-42 and His-44. Residues 44–46 (HLD), Asp-172, and Gly-201 contribute to the a purine D-ribonucleoside site. The gating helix loop; regulates binding affinity for substrates and thus substrate selectivity stretch occupies residues 170–184 (IGDTGHEAANIKASA). His-226 lines the Zn(2+) pocket. A purine D-ribonucleoside-binding residues include Glu-229, His-253, and Asp-310. Asp-310 provides a ligand contact to Zn(2+).

This sequence belongs to the metallo-dependent hydrolases superfamily. Adenosine and AMP deaminases family. Zn(2+) serves as cofactor.

It carries out the reaction adenosine + H2O + H(+) = inosine + NH4(+). The catalysed reaction is S-methyl-5'-thioadenosine + H2O + H(+) = S-methyl-5'-thioinosine + NH4(+). Its pathway is purine metabolism; purine nucleoside salvage. Its activity is regulated as follows. Inhibited by coformycin and methylthiocoformycin (MT-coformycin). In terms of biological role, catalyzes the hydrolytic deamination of adenosine to produce inosine. Unlike mammalian adenosine deaminases, also catalyzes the deamination of 5'-methylthioadenosine (MTA), a by-product of polyamine biosynthesis, to produce 5'-methylthioinosine (MTI). Plays an essential role in the purine salvage pathway which allows the parasite to use host cell purines for the synthesis of nucleic acids. The sequence is that of Adenosine deaminase from Plasmodium vivax (strain Salvador I).